Here is a 136-residue protein sequence, read N- to C-terminus: Large ribosomal subunit protein uL16 (136 aa).

It belongs to the universal ribosomal protein uL16 family. Part of the 50S ribosomal subunit.

Its function is as follows. Binds 23S rRNA and is also seen to make contacts with the A and possibly P site tRNAs. This is Large ribosomal subunit protein uL16 from Photobacterium profundum (strain SS9).